The chain runs to 161 residues: Phosphopantetheine adenylyltransferase (161 aa).

Serine 8 provides a ligand contact to substrate. Residues 8–9 (SF) and histidine 16 each bind ATP. Substrate contacts are provided by residues 36–40 (ENPRK), leucine 72, and arginine 86. ATP-binding positions include 87–89 (GLR), glutamate 97, and 122–128 (FSFISSS). A substrate-binding site is contributed by glutamate 132.

Belongs to the bacterial CoaD family. Homohexamer. Requires Mg(2+) as cofactor.

It is found in the cytoplasm. It catalyses the reaction (R)-4'-phosphopantetheine + ATP + H(+) = 3'-dephospho-CoA + diphosphate. It participates in cofactor biosynthesis; coenzyme A biosynthesis; CoA from (R)-pantothenate: step 4/5. In terms of biological role, reversibly transfers an adenylyl group from ATP to 4'-phosphopantetheine, yielding dephospho-CoA (dPCoA) and pyrophosphate. The polypeptide is Phosphopantetheine adenylyltransferase (Thermotoga maritima (strain ATCC 43589 / DSM 3109 / JCM 10099 / NBRC 100826 / MSB8)).